The following is a 205-amino-acid chain: Red chlorophyll catabolite reductase (205 aa).

Substrate-binding residues include Glu39 and Asp175.

In terms of assembly, homodimer. The N-terminus is blocked. In etiolated and green primary leaves. Low amount in roots.

The protein localises to the plastid. The protein resides in the chloroplast stroma. The catalysed reaction is primary fluorescent chlorophyll catabolite + 2 oxidized [2Fe-2S]-[ferredoxin] = red chlorophyll catabolite + 2 reduced [2Fe-2S]-[ferredoxin] + 3 H(+). It functions in the pathway porphyrin-containing compound metabolism; chlorophyll degradation. Catalyzes the key reaction of chlorophyll catabolism, porphyrin macrocycle cleavage of pheophorbide a (pheide a) to a primary fluorescent catabolite (pFCC). Works in a two-step reaction with pheophorbide a oxygenase (PaO) by reducing the C20/C1 double bond of the intermediate, RCC. This is Red chlorophyll catabolite reductase (rccR) from Hordeum vulgare (Barley).